The sequence spans 376 residues: Alcohol dehydrogenase 6 (376 aa).

7 residues coordinate Zn(2+): Cys-47, His-69, Cys-99, Cys-102, Cys-105, Cys-113, and Cys-175. NAD(+) is bound by residues 200-205 (GLGGVG), Asp-224, Arg-229, 293-295 (VGA), and Arg-371.

Belongs to the zinc-containing alcohol dehydrogenase family. Class-V subfamily. As to quaternary structure, dimer. Zn(2+) is required as a cofactor.

It is found in the cytoplasm. It carries out the reaction a primary alcohol + NAD(+) = an aldehyde + NADH + H(+). The catalysed reaction is a secondary alcohol + NAD(+) = a ketone + NADH + H(+). Alcohol dehydrogenase. Catalyzes the NAD-dependent oxidation of primary alcohols to the corresponding aldehydes. Oxidizes secondary alcohols to the corresponding ketones. The chain is Alcohol dehydrogenase 6 (Adh6) from Rattus norvegicus (Rat).